The chain runs to 231 residues: tRNA (guanine-N(1)-)-methyltransferase (231 aa).

S-adenosyl-L-methionine-binding positions include glycine 112 and 132 to 137 (IGDYIL).

Belongs to the RNA methyltransferase TrmD family. Homodimer.

Its subcellular location is the cytoplasm. The enzyme catalyses guanosine(37) in tRNA + S-adenosyl-L-methionine = N(1)-methylguanosine(37) in tRNA + S-adenosyl-L-homocysteine + H(+). In terms of biological role, specifically methylates guanosine-37 in various tRNAs. This chain is tRNA (guanine-N(1)-)-methyltransferase, found in Sulfurimonas denitrificans (strain ATCC 33889 / DSM 1251) (Thiomicrospira denitrificans (strain ATCC 33889 / DSM 1251)).